A 145-amino-acid chain; its full sequence is Large ribosomal subunit protein bL17 (145 aa).

A disordered region spans residues 123–145 (KRVDRKKKDPAKDKTEEKKLATA).

This sequence belongs to the bacterial ribosomal protein bL17 family. Part of the 50S ribosomal subunit. Contacts protein L32.

In Pelagibacter ubique (strain HTCC1062), this protein is Large ribosomal subunit protein bL17.